The chain runs to 242 residues: Orotidine 5'-phosphate decarboxylase (242 aa).

Substrate is bound by residues D22, K44, 71 to 80 (DLKYHDIPNT), T130, R190, Q199, G219, and R220. The Proton donor role is filled by K73.

Belongs to the OMP decarboxylase family. Type 1 subfamily. As to quaternary structure, homodimer.

It catalyses the reaction orotidine 5'-phosphate + H(+) = UMP + CO2. The protein operates within pyrimidine metabolism; UMP biosynthesis via de novo pathway; UMP from orotate: step 2/2. In terms of biological role, catalyzes the decarboxylation of orotidine 5'-monophosphate (OMP) to uridine 5'-monophosphate (UMP). In Laribacter hongkongensis (strain HLHK9), this protein is Orotidine 5'-phosphate decarboxylase.